Reading from the N-terminus, the 282-residue chain is Bifunctional protein FolD (282 aa).

NADP(+) contacts are provided by residues N163–S165, T188, and I229.

The protein belongs to the tetrahydrofolate dehydrogenase/cyclohydrolase family. As to quaternary structure, homodimer.

It carries out the reaction (6R)-5,10-methylene-5,6,7,8-tetrahydrofolate + NADP(+) = (6R)-5,10-methenyltetrahydrofolate + NADPH. The catalysed reaction is (6R)-5,10-methenyltetrahydrofolate + H2O = (6R)-10-formyltetrahydrofolate + H(+). It functions in the pathway one-carbon metabolism; tetrahydrofolate interconversion. Its function is as follows. Catalyzes the oxidation of 5,10-methylenetetrahydrofolate to 5,10-methenyltetrahydrofolate and then the hydrolysis of 5,10-methenyltetrahydrofolate to 10-formyltetrahydrofolate. This chain is Bifunctional protein FolD, found in Malacoplasma penetrans (strain HF-2) (Mycoplasma penetrans).